Consider the following 357-residue polypeptide: Putative lipopolysaccharide heptosyltransferase 4 (357 aa).

It catalyses the reaction alpha-D-Glc-(1-&gt;2)-alpha-D-Glc-(1-&gt;3)-[alpha-D-Gal-(1-&gt;6)]-alpha-D-Glc-(1-&gt;3)-[L-alpha-D-Hep-(1-&gt;7)]-4-O-PO3(2-)-L-alpha-D-Hep-(1-&gt;3)-4-O-PO3(2-)-L-alpha-D-Hep-(1-&gt;5)-[alpha-Kdo-(2-&gt;4)]-alpha-Kdo-(2-&gt;6)-lipid A + ADP-L-glycero-beta-D-manno-heptose = lipid A-core + ADP + H(+). Its pathway is bacterial outer membrane biogenesis; LPS core biosynthesis. In terms of biological role, transferase involved in the biosynthesis of the core oligosaccharide region of lipopolysaccharide (LPS). May catalyze the addition of the terminal heptose (heptose IV) to the outer-core glucose III, the last step of the lipid A-core oligosaccharide biosynthesis. This is Putative lipopolysaccharide heptosyltransferase 4 from Escherichia coli (strain K12).